A 474-amino-acid chain; its full sequence is MAGKTLYDKLWDMHLVKQRDDGSALIYIDRHILHEVTSPQAFEGLRLAGRKPWRIDANIATPDHNVPTTRTERKGGIAAIADEVSRLQVQTLDENCDDFGITEFKMNDVRQGIVHVVGPEQGATLPGMTVVCGDSHTSTHGAFGALAHGIGTSEVEHVLATQCLVAKKMKNMLVKVEGRLPAGVTAKDIVLAVIGRIGTAGGNGHAIEFAGSAIRDLSIEGRMTICNMSIEAGARVGLVAVDQKTIDYVKGRPFAPSAEQWDQAVACWQGLVSDADARFDTVVELDAAQIKPQVSWGTSPEMVLAVDQNVPDPARESDPIKRGSIERALKYMGLRPNQAITDIQLDRVFIGSCTNSRIEDLRAAAEVARGRKVAATIKQALVVPGSGLVKEQAEKEGLDRIFIEAGFEWREPGCSMCLAMNPDRLESGEHCASTSNRNFEGRQGAGGRTHLVSPAMAAAAAVNGRFIDVRELLA.

Residues Cys-353, Cys-414, and Cys-417 each coordinate [4Fe-4S] cluster.

It belongs to the aconitase/IPM isomerase family. LeuC type 1 subfamily. As to quaternary structure, heterodimer of LeuC and LeuD. Requires [4Fe-4S] cluster as cofactor.

The enzyme catalyses (2R,3S)-3-isopropylmalate = (2S)-2-isopropylmalate. Its pathway is amino-acid biosynthesis; L-leucine biosynthesis; L-leucine from 3-methyl-2-oxobutanoate: step 2/4. Functionally, catalyzes the isomerization between 2-isopropylmalate and 3-isopropylmalate, via the formation of 2-isopropylmaleate. This Pseudomonas aeruginosa (strain LESB58) protein is 3-isopropylmalate dehydratase large subunit.